The following is an 87-amino-acid chain: Prolactin-releasing peptide (87 aa).

A signal peptide spans 1–22; it reads MKVLRAWLLCLLMLGLALRGAA. A Phenylalanine amide modification is found at phenylalanine 53. Residues 58-87 constitute a propeptide that is removed on maturation; it reads ATLGDVPKPGLRPRLTCFPLEGGAMSSQDG.

In terms of tissue distribution, medulla oblongata and hypothalamus.

Its subcellular location is the secreted. In terms of biological role, stimulates prolactin (PRL) release and regulates the expression of prolactin through its receptor GPR10. May stimulate lactotrophs directly to secrete PRL. The protein is Prolactin-releasing peptide (PRLH) of Homo sapiens (Human).